The sequence spans 253 residues: Snake venom serine protease homolog HS120 (253 aa).

The signal sequence occupies residues 1 to 18; the sequence is MVLIRVIANLLILQLSYA. Positions 19–24 are excised as a propeptide; sequence QKSSEL. In terms of domain architecture, Peptidase S1 spans 25–244; that stretch reads VIGGDECNIN…YLPWIQSIIA (220 aa). Cystine bridges form between Cys-31-Cys-158, Cys-49-Cys-65, Cys-98-Cys-251, Cys-137-Cys-205, Cys-169-Cys-184, and Cys-195-Cys-220. N-linked (GlcNAc...) asparagine glycosylation is found at Asn-116 and Asn-165.

This sequence belongs to the peptidase S1 family. Snake venom subfamily. As to expression, expressed by the venom gland.

Its subcellular location is the secreted. Functionally, snake venom serine protease homolog that may act in the hemostasis system of the prey. This is Snake venom serine protease homolog HS120 from Bothrops jararaca (Jararaca).